Consider the following 237-residue polypeptide: Probable transcriptional regulatory protein Exig_1693 (237 aa).

It belongs to the TACO1 family. YeeN subfamily.

It localises to the cytoplasm. The sequence is that of Probable transcriptional regulatory protein Exig_1693 from Exiguobacterium sibiricum (strain DSM 17290 / CCUG 55495 / CIP 109462 / JCM 13490 / 255-15).